The following is a 241-amino-acid chain: Beta-casein (241 aa).

The first 15 residues, 1-15, serve as a signal peptide directing secretion; sequence MKILILACLVALALA. Residues 21–45 are disordered; sequence LNVSSETVESLSSNEPDSSSEESIT. The residue at position 24 (S24) is a Phosphoserine; in form 4-P, form 5-P, form 6-P and form 7-P. The residue at position 25 (S25) is a Phosphoserine; in form 7-P. A Phosphothreonine; in form 6-P and form 7-P modification is found at T27. 2 positions are modified to phosphoserine: S30 and S32. Position 33 is a phosphoserine; in form 5-P, form 6-P and form 7-P (S33). Phosphoserine; in form 4-P, form 5-P, form 6-P and form 7-P occurs at positions 38, 39, and 40. At N150 the chain carries Deamidated asparagine.

The protein belongs to the beta-casein family. There are at least five different forms found in milk, with varying degrees of phosphorylation. These include form 3-P which is phosphorylated at three sites that have not been determined, this form is present in very low amounts, form 4-P which is phosphorylated at four sites, form 5-P which is phosphorylated at five sites, form 6-P which is phosphorylated at six sites, and form 7-P which is phosphorylated at seven sites. In terms of processing, spontaneous deamidation of Asn-150 produces aspartate or isoaspartate. As to expression, mammary gland specific. Secreted in milk.

The protein localises to the secreted. In terms of biological role, important role in determination of the surface properties of the casein micelles. This Equus caballus (Horse) protein is Beta-casein.